A 243-amino-acid polypeptide reads, in one-letter code: NAD-dependent protein deacylase SIR2rp3 (243 aa).

The Deacetylase sirtuin-type domain maps to 1 to 239; that stretch reads MKACRCITIL…PTWVDQVLKE (239 aa). 12–31 is a binding site for NAD(+); that stretch reads GAGISAESGISTFRDSNGLW. Tyrosine 56 and arginine 59 together coordinate substrate. 95–98 serves as a coordination point for NAD(+); sequence QNVD. Histidine 113 functions as the Proton acceptor in the catalytic mechanism. Zn(2+) is bound by residues cysteine 121 and cysteine 141. NAD(+)-binding positions include 181–183 and alanine 225; that span reads GTS.

It belongs to the sirtuin family. Class III subfamily. Requires Zn(2+) as cofactor.

Its subcellular location is the mitochondrion. The catalysed reaction is N(6)-malonyl-L-lysyl-[protein] + NAD(+) + H2O = 2''-O-malonyl-ADP-D-ribose + nicotinamide + L-lysyl-[protein]. It catalyses the reaction N(6)-succinyl-L-lysyl-[protein] + NAD(+) + H2O = 2''-O-succinyl-ADP-D-ribose + nicotinamide + L-lysyl-[protein]. The enzyme catalyses N(6)-glutaryl-L-lysyl-[protein] + NAD(+) + H2O = 2''-O-glutaryl-ADP-D-ribose + nicotinamide + L-lysyl-[protein]. Its function is as follows. NAD-dependent lysine demalonylase, desuccinylase and deglutarylase that specifically removes malonyl, succinyl and glutaryl groups on target proteins. Has weak NAD-dependent protein deacetylase activity; however this activity may not be physiologically relevant in vivo. In Leishmania major, this protein is NAD-dependent protein deacylase SIR2rp3 (SIR2rp3).